The following is a 71-amino-acid chain: Small ribosomal subunit protein bS21 (71 aa).

This sequence belongs to the bacterial ribosomal protein bS21 family.

The protein is Small ribosomal subunit protein bS21 of Marinobacter nauticus (strain ATCC 700491 / DSM 11845 / VT8) (Marinobacter aquaeolei).